The following is a 754-amino-acid chain: Endothelin-converting enzyme 1 (754 aa).

The Cytoplasmic segment spans residues 1–52 (MMSTYKRATLDEEDLVDSLSESDVYPNHLQVNFRGPRNGQRCWAARTPVEKR). Thr9 carries the phosphothreonine modification. A helical; Signal-anchor for type II membrane protein transmembrane segment spans residues 53–73 (LVVLVALLAAALVACLAVLGI). Topologically, residues 74–754 (QYQTRTPSVC…MNPHHKCEVW (681 aa)) are extracellular. One can recognise a Peptidase M13 domain in the interval 82–754 (VCLSEACISV…MNPHHKCEVW (673 aa)). 5 disulfides stabilise this stretch: Cys83-Cys88, Cys106-Cys739, Cys114-Cys699, Cys169-Cys419, and Cys628-Cys751. N-linked (GlcNAc...) asparagine glycosylation is found at Asn150, Asn171, Asn194, Asn254, Asn300, Asn346, Asn367, and Asn523. His591 contacts Zn(2+). Residue Glu592 is part of the active site. His595 is a binding site for Zn(2+). N-linked (GlcNAc...) asparagine glycans are attached at residues Asn616 and Asn635. Glu651 serves as a coordination point for Zn(2+). Catalysis depends on Asp655, which acts as the Proton donor.

The protein belongs to the peptidase M13 family. As to quaternary structure, homodimer; disulfide-linked. Interacts with PPP1R16B. Interacts with TSPAN8; this interaction recruits the endothelin converting enzyme ECE1 to tetraspanin-enriched microdomains and positively modulates its enzymatic activity. Requires Zn(2+) as cofactor.

The protein localises to the cell membrane. It catalyses the reaction Hydrolysis of the 21-Trp-|-Val-22 bond in big endothelin to form endothelin 1.. Its activity is regulated as follows. Inhibited by phosphoramidon. Functionally, converts big endothelin-1 to endothelin-1. This is Endothelin-converting enzyme 1 (ECE1) from Bos taurus (Bovine).